The primary structure comprises 548 residues: Chaperonin GroEL (548 aa).

ATP is bound by residues 30–33 (TLGP), Lys-51, 87–91 (DGTTT), Gly-415, and Asp-495.

Belongs to the chaperonin (HSP60) family. Forms a cylinder of 14 subunits composed of two heptameric rings stacked back-to-back. Interacts with the co-chaperonin GroES.

Its subcellular location is the cytoplasm. The enzyme catalyses ATP + H2O + a folded polypeptide = ADP + phosphate + an unfolded polypeptide.. Functionally, together with its co-chaperonin GroES, plays an essential role in assisting protein folding. The GroEL-GroES system forms a nano-cage that allows encapsulation of the non-native substrate proteins and provides a physical environment optimized to promote and accelerate protein folding. The sequence is that of Chaperonin GroEL from Yersinia pseudotuberculosis serotype O:1b (strain IP 31758).